The following is a 296-amino-acid chain: Phosphoribosylaminoimidazole-succinocarboxamide synthase (296 aa).

This sequence belongs to the SAICAR synthetase family.

It catalyses the reaction 5-amino-1-(5-phospho-D-ribosyl)imidazole-4-carboxylate + L-aspartate + ATP = (2S)-2-[5-amino-1-(5-phospho-beta-D-ribosyl)imidazole-4-carboxamido]succinate + ADP + phosphate + 2 H(+). It participates in purine metabolism; IMP biosynthesis via de novo pathway; 5-amino-1-(5-phospho-D-ribosyl)imidazole-4-carboxamide from 5-amino-1-(5-phospho-D-ribosyl)imidazole-4-carboxylate: step 1/2. This is Phosphoribosylaminoimidazole-succinocarboxamide synthase from Geobacter metallireducens (strain ATCC 53774 / DSM 7210 / GS-15).